The sequence spans 402 residues: Serine/threonine-protein phosphatase 4 regulatory subunit 2 (402 aa).

The tract at residues 258–402 (NEDQDDENTG…FSKRNKASES (145 aa)) is disordered. The span at 266 to 277 (TGFSNQVINDNN) shows a compositional bias: polar residues. The span at 278-319 (DSQEDDDEDSDYIEEDEGDEDEDDDDDEEEEEEEDGDEDEDE) shows a compositional bias: acidic residues. The segment covering 320–337 (DKHFDIKVEEEAVKEDAN) has biased composition (basic and acidic residues). Low complexity predominate over residues 345 to 358 (NVSNNSDDSSLQND).

The protein belongs to the PPP4R2 family. As to quaternary structure, regulatory subunit (R2) of the histone H2A phosphatase complex (HTP-C) consisting of PPH3, PSY2 and PSY4.

The protein resides in the nucleus. Its function is as follows. Regulatory subunit of the histone H2A phosphatase complex, which dephosphorylates H2AS128ph (gamma-H2A) that has been displaced from sites of DNA lesions in the double-stranded DNA break repair process. Dephosphorylation is necessary for efficient recovery from the DNA damage checkpoint. The sequence is that of Serine/threonine-protein phosphatase 4 regulatory subunit 2 (PSY4) from Candida glabrata (strain ATCC 2001 / BCRC 20586 / JCM 3761 / NBRC 0622 / NRRL Y-65 / CBS 138) (Yeast).